The chain runs to 525 residues: Probable bifunctional tRNA threonylcarbamoyladenosine biosynthesis protein (525 aa).

The kae1 stretch occupies residues 1-322; it reads MPEKRVLGIE…FRSDQVEVTW (322 aa). The Fe cation site is built by histidine 106, histidine 110, and tyrosine 127. L-threonylcarbamoyladenylate is bound by residues 127–131, aspartate 159, glycine 172, glutamate 176, and asparagine 255; that span reads YASGA. Aspartate 283 provides a ligand contact to Fe cation. One can recognise a Protein kinase domain in the interval 331-525; it reads APGQSETAER…HEIELRGRYL (195 aa). Residues 338 to 346 and lysine 355 each bind ATP; that span reads AERGAEASV. Aspartate 442 (proton acceptor; for kinase activity) is an active-site residue.

This sequence in the N-terminal section; belongs to the KAE1 / TsaD family. The protein in the C-terminal section; belongs to the protein kinase superfamily. Tyr protein kinase family. BUD32 subfamily. In terms of assembly, component of the KEOPS complex that consists of Kae1, Bud32, Cgi121 and Pcc1; the whole complex dimerizes. Fe(2+) is required as a cofactor.

Its subcellular location is the cytoplasm. It carries out the reaction L-seryl-[protein] + ATP = O-phospho-L-seryl-[protein] + ADP + H(+). The catalysed reaction is L-threonyl-[protein] + ATP = O-phospho-L-threonyl-[protein] + ADP + H(+). The enzyme catalyses L-threonylcarbamoyladenylate + adenosine(37) in tRNA = N(6)-L-threonylcarbamoyladenosine(37) in tRNA + AMP + H(+). Required for the formation of a threonylcarbamoyl group on adenosine at position 37 (t(6)A37) in tRNAs that read codons beginning with adenine. Is a component of the KEOPS complex that is probably involved in the transfer of the threonylcarbamoyl moiety of threonylcarbamoyl-AMP (TC-AMP) to the N6 group of A37. The Kae1 domain likely plays a direct catalytic role in this reaction. The Bud32 domain probably displays kinase activity that regulates Kae1 function. This chain is Probable bifunctional tRNA threonylcarbamoyladenosine biosynthesis protein, found in Methanocorpusculum labreanum (strain ATCC 43576 / DSM 4855 / Z).